The following is a 338-amino-acid chain: tRNA N6-adenosine threonylcarbamoyltransferase (338 aa).

The Fe cation site is built by His111 and His115. Residues 134 to 138 (LVSGG), Asp167, Gly180, and Asn272 each bind substrate. Residue Asp300 coordinates Fe cation.

It belongs to the KAE1 / TsaD family. Fe(2+) serves as cofactor.

The protein resides in the cytoplasm. The catalysed reaction is L-threonylcarbamoyladenylate + adenosine(37) in tRNA = N(6)-L-threonylcarbamoyladenosine(37) in tRNA + AMP + H(+). Functionally, required for the formation of a threonylcarbamoyl group on adenosine at position 37 (t(6)A37) in tRNAs that read codons beginning with adenine. Is involved in the transfer of the threonylcarbamoyl moiety of threonylcarbamoyl-AMP (TC-AMP) to the N6 group of A37, together with TsaE and TsaB. TsaD likely plays a direct catalytic role in this reaction. The polypeptide is tRNA N6-adenosine threonylcarbamoyltransferase (Shewanella baltica (strain OS223)).